Here is a 273-residue protein sequence, read N- to C-terminus: Ribosomal RNA small subunit methyltransferase A (273 aa).

The S-adenosyl-L-methionine site is built by Asn-20, Leu-22, Gly-47, Glu-68, Asp-90, and Asn-110.

It belongs to the class I-like SAM-binding methyltransferase superfamily. rRNA adenine N(6)-methyltransferase family. RsmA subfamily.

The protein localises to the cytoplasm. The enzyme catalyses adenosine(1518)/adenosine(1519) in 16S rRNA + 4 S-adenosyl-L-methionine = N(6)-dimethyladenosine(1518)/N(6)-dimethyladenosine(1519) in 16S rRNA + 4 S-adenosyl-L-homocysteine + 4 H(+). Specifically dimethylates two adjacent adenosines (A1518 and A1519) in the loop of a conserved hairpin near the 3'-end of 16S rRNA in the 30S particle. May play a critical role in biogenesis of 30S subunits. This is Ribosomal RNA small subunit methyltransferase A from Chlorobium luteolum (strain DSM 273 / BCRC 81028 / 2530) (Pelodictyon luteolum).